The chain runs to 351 residues: Spermidine/putrescine import ATP-binding protein PotA (351 aa).

The 231-residue stretch at 6–236 (LELRNVTKEY…PENAWVANFI (231 aa)) folds into the ABC transporter domain. 38–45 (GPSGCGKT) provides a ligand contact to ATP.

Belongs to the ABC transporter superfamily. Spermidine/putrescine importer (TC 3.A.1.11.1) family. In terms of assembly, the complex is composed of two ATP-binding proteins (PotA), two transmembrane proteins (PotB and PotC) and a solute-binding protein (PotD).

It localises to the cell membrane. It catalyses the reaction ATP + H2O + polyamine-[polyamine-binding protein]Side 1 = ADP + phosphate + polyamineSide 2 + [polyamine-binding protein]Side 1.. In terms of biological role, part of the ABC transporter complex PotABCD involved in spermidine/putrescine import. Responsible for energy coupling to the transport system. The chain is Spermidine/putrescine import ATP-binding protein PotA from Mycoplasma mycoides subsp. mycoides SC (strain CCUG 32753 / NCTC 10114 / PG1).